Reading from the N-terminus, the 797-residue chain is Probable exo-1,4-beta-xylosidase bxlB (797 aa).

A signal peptide spans 1–21; that stretch reads MPLICIVYFLQYLDKIAISYA. 2 N-linked (GlcNAc...) asparagine glycosylation sites follow: N86 and N126. D312 is a catalytic residue. N-linked (GlcNAc...) asparagine glycans are attached at residues N364, N431, N442, N483, N644, and N787.

The protein belongs to the glycosyl hydrolase 3 family.

The protein localises to the secreted. It catalyses the reaction Hydrolysis of (1-&gt;4)-beta-D-xylans, to remove successive D-xylose residues from the non-reducing termini.. It participates in glycan degradation; xylan degradation. Xylan 1,4-beta-xylosidase involved in the hydrolysis of xylan, a major structural heterogeneous polysaccharide found in plant biomass representing the second most abundant polysaccharide in the biosphere, after cellulose. The polypeptide is Probable exo-1,4-beta-xylosidase bxlB (bxlB) (Aspergillus oryzae (strain ATCC 42149 / RIB 40) (Yellow koji mold)).